A 274-amino-acid polypeptide reads, in one-letter code: Ribosomal RNA small subunit methyltransferase A (274 aa).

Residues histidine 15, leucine 17, glycine 42, glutamate 64, aspartate 89, and asparagine 108 each coordinate S-adenosyl-L-methionine.

This sequence belongs to the class I-like SAM-binding methyltransferase superfamily. rRNA adenine N(6)-methyltransferase family. RsmA subfamily.

Its subcellular location is the cytoplasm. The enzyme catalyses adenosine(1518)/adenosine(1519) in 16S rRNA + 4 S-adenosyl-L-methionine = N(6)-dimethyladenosine(1518)/N(6)-dimethyladenosine(1519) in 16S rRNA + 4 S-adenosyl-L-homocysteine + 4 H(+). Functionally, specifically dimethylates two adjacent adenosines (A1518 and A1519) in the loop of a conserved hairpin near the 3'-end of 16S rRNA in the 30S particle. May play a critical role in biogenesis of 30S subunits. The chain is Ribosomal RNA small subunit methyltransferase A from Prochlorococcus marinus (strain MIT 9301).